The sequence spans 700 residues: Elongation factor G (700 aa).

The tr-type G domain occupies 10–286 (NKVRNIGIMA…AVIDYLPNPL (277 aa)). Residues 19–26 (AHIDAGKT), 83–87 (DTPGH), and 137–140 (NKMD) contribute to the GTP site.

This sequence belongs to the TRAFAC class translation factor GTPase superfamily. Classic translation factor GTPase family. EF-G/EF-2 subfamily.

It localises to the cytoplasm. In terms of biological role, catalyzes the GTP-dependent ribosomal translocation step during translation elongation. During this step, the ribosome changes from the pre-translocational (PRE) to the post-translocational (POST) state as the newly formed A-site-bound peptidyl-tRNA and P-site-bound deacylated tRNA move to the P and E sites, respectively. Catalyzes the coordinated movement of the two tRNA molecules, the mRNA and conformational changes in the ribosome. In Rhodococcus jostii (strain RHA1), this protein is Elongation factor G.